Reading from the N-terminus, the 150-residue chain is 3-hydroxyacyl-[acyl-carrier-protein] dehydratase FabZ (150 aa).

His-52 is a catalytic residue.

It belongs to the thioester dehydratase family. FabZ subfamily.

It is found in the cytoplasm. The catalysed reaction is a (3R)-hydroxyacyl-[ACP] = a (2E)-enoyl-[ACP] + H2O. Functionally, involved in unsaturated fatty acids biosynthesis. Catalyzes the dehydration of short chain beta-hydroxyacyl-ACPs and long chain saturated and unsaturated beta-hydroxyacyl-ACPs. The chain is 3-hydroxyacyl-[acyl-carrier-protein] dehydratase FabZ from Albidiferax ferrireducens (strain ATCC BAA-621 / DSM 15236 / T118) (Rhodoferax ferrireducens).